The primary structure comprises 211 residues: ATP phosphoribosyltransferase (211 aa).

Belongs to the ATP phosphoribosyltransferase family. Short subfamily. Heteromultimer composed of HisG and HisZ subunits.

It localises to the cytoplasm. The enzyme catalyses 1-(5-phospho-beta-D-ribosyl)-ATP + diphosphate = 5-phospho-alpha-D-ribose 1-diphosphate + ATP. Its pathway is amino-acid biosynthesis; L-histidine biosynthesis; L-histidine from 5-phospho-alpha-D-ribose 1-diphosphate: step 1/9. Functionally, catalyzes the condensation of ATP and 5-phosphoribose 1-diphosphate to form N'-(5'-phosphoribosyl)-ATP (PR-ATP). Has a crucial role in the pathway because the rate of histidine biosynthesis seems to be controlled primarily by regulation of HisG enzymatic activity. This is ATP phosphoribosyltransferase from Pseudomonas syringae pv. tomato (strain ATCC BAA-871 / DC3000).